The following is a 380-amino-acid chain: GDP-mannose:cellobiosyl-diphosphopolyprenol alpha-mannosyltransferase (380 aa).

This sequence belongs to the glycosyltransferase group 1 family. Glycosyltransferase 4 subfamily.

The enzyme catalyses beta-D-Glc-(1-&gt;4)-alpha-D-Glc-di-trans,octa-cis-undecaprenyl diphosphate + GDP-alpha-D-mannose = alpha-D-Man-(1-&gt;3)-beta-D-Glc-(1-&gt;4)-alpha-D-Glc-1-di-trans,octa-cis-undecaprenyl diphosphate + GDP + H(+). In terms of biological role, involved in the biosynthesis of the exopolysaccharide xanthan, a polymer that is comprised of repeating pentasaccharide units with the structure of a beta-(1,4)-linked D-glucose backbone with trisaccharide side chains composed of mannose-beta-(1,4)-glucuronic acid-beta-(1,2)-mannose attached to alternate glucose residues in the backbone by alpha-(1,3) linkages. Xanthan is involved in pathogenicity but has also been used in a variety of applications as a specialty polymer for commercial applications, including food additives, where they act as viscosifying, stabilizing, emulsifying, or gelling agents. This Xanthomonas campestris protein is GDP-mannose:cellobiosyl-diphosphopolyprenol alpha-mannosyltransferase (gumH).